Consider the following 206-residue polypeptide: Protein GrpE (206 aa).

This sequence belongs to the GrpE family. In terms of assembly, homodimer.

The protein localises to the cytoplasm. Functionally, participates actively in the response to hyperosmotic and heat shock by preventing the aggregation of stress-denatured proteins, in association with DnaK and GrpE. It is the nucleotide exchange factor for DnaK and may function as a thermosensor. Unfolded proteins bind initially to DnaJ; upon interaction with the DnaJ-bound protein, DnaK hydrolyzes its bound ATP, resulting in the formation of a stable complex. GrpE releases ADP from DnaK; ATP binding to DnaK triggers the release of the substrate protein, thus completing the reaction cycle. Several rounds of ATP-dependent interactions between DnaJ, DnaK and GrpE are required for fully efficient folding. This chain is Protein GrpE, found in Shewanella sp. (strain W3-18-1).